The following is an 86-amino-acid chain: Sec-independent protein translocase protein TatA (86 aa).

Residues 1 to 21 form a helical membrane-spanning segment; sequence MGISIWQLLIILAIVLVLFGA.

It belongs to the TatA/E family. As to quaternary structure, the Tat system comprises two distinct complexes: a TatABC complex, containing multiple copies of TatA, TatB and TatC subunits, and a separate TatA complex, containing only TatA subunits. Substrates initially bind to the TatABC complex, which probably triggers association of the separate TatA complex to form the active translocon.

The protein resides in the cell inner membrane. In terms of biological role, part of the twin-arginine translocation (Tat) system that transports large folded proteins containing a characteristic twin-arginine motif in their signal peptide across membranes. TatA could form the protein-conducting channel of the Tat system. The chain is Sec-independent protein translocase protein TatA from Hydrogenovibrio crunogenus (strain DSM 25203 / XCL-2) (Thiomicrospira crunogena).